The sequence spans 254 residues: Pyruvate dehydrogenase complex repressor (254 aa).

One can recognise an HTH gntR-type domain in the interval 9-77 (PKLSDVIEQQ…QGGGTFVQSS (69 aa)). A DNA-binding region (H-T-H motif) is located at residues 37-56 (ERELAKQFDVSRPSLREAIQ).

Its function is as follows. Transcriptional repressor for the pyruvate dehydrogenase complex genes aceEF and lpd. This chain is Pyruvate dehydrogenase complex repressor (pdhR), found in Salmonella typhi.